Reading from the N-terminus, the 297-residue chain is Phosphoribosylaminoimidazole-succinocarboxamide synthase (297 aa).

It belongs to the SAICAR synthetase family.

The catalysed reaction is 5-amino-1-(5-phospho-D-ribosyl)imidazole-4-carboxylate + L-aspartate + ATP = (2S)-2-[5-amino-1-(5-phospho-beta-D-ribosyl)imidazole-4-carboxamido]succinate + ADP + phosphate + 2 H(+). It functions in the pathway purine metabolism; IMP biosynthesis via de novo pathway; 5-amino-1-(5-phospho-D-ribosyl)imidazole-4-carboxamide from 5-amino-1-(5-phospho-D-ribosyl)imidazole-4-carboxylate: step 1/2. In Methylococcus capsulatus (strain ATCC 33009 / NCIMB 11132 / Bath), this protein is Phosphoribosylaminoimidazole-succinocarboxamide synthase.